The sequence spans 73 residues: Putative membrane protein insertion efficiency factor (73 aa).

This sequence belongs to the UPF0161 family.

It is found in the cell inner membrane. Its function is as follows. Could be involved in insertion of integral membrane proteins into the membrane. This is Putative membrane protein insertion efficiency factor from Rickettsia bellii (strain OSU 85-389).